A 285-amino-acid polypeptide reads, in one-letter code: Membrane cofactor protein (285 aa).

An N-terminal signal peptide occupies residues 1–34 (MAPPSRRECPFPSRRFPGLFLAALALLLSSRSDA). 4 Sushi domains span residues 35–96 (CGPP…PCVK), 97–159 (KVCH…ICQK), 160–225 (ILCK…ECKV), and 226–285 (VKCR…KCVK). Disulfide bonds link Cys-99–Cys-141, Cys-127–Cys-157, Cys-162–Cys-210, Cys-191–Cys-223, Cys-228–Cys-270, and Cys-256–Cys-283. N-linked (GlcNAc...) asparagine glycosylation occurs at Asn-114. O-linked (GalNAc...) threonine glycans are attached at residues Thr-167 and Thr-207.

In terms of assembly, interacts with C3b. Interacts with C4b. Interacts with moesin/MSN. In terms of processing, N-glycosylated. Probably less N-glycosylated in testis. Present in blood and sperm. Isoform 2, but not isoform 1, is present at the erythrocyte membrane (at protein level).

It is found in the cytoplasmic vesicle. The protein localises to the secretory vesicle. It localises to the acrosome inner membrane. Functionally, acts as a cofactor for complement factor I, a serine protease which protects autologous cells against complement-mediated injury by cleaving C3b and C4b deposited on host tissue. May be involved in the fusion of the spermatozoa with the oocyte during fertilization. Also acts as a costimulatory factor for T-cells which induces the differentiation of CD4+ into T-regulatory 1 cells. T-regulatory 1 cells suppress immune responses by secreting interleukin-10, and therefore are thought to prevent autoimmunity. This is Membrane cofactor protein (CD46) from Saimiri sciureus (Common squirrel monkey).